The primary structure comprises 309 residues: Aspartate carbamoyltransferase catalytic subunit (309 aa).

Positions 55 and 56 each coordinate carbamoyl phosphate. Position 85 (K85) interacts with L-aspartate. Carbamoyl phosphate contacts are provided by R106, H135, and Q138. R168 and R230 together coordinate L-aspartate. Carbamoyl phosphate is bound by residues L268 and P269.

It belongs to the aspartate/ornithine carbamoyltransferase superfamily. ATCase family. Heterododecamer (2C3:3R2) of six catalytic PyrB chains organized as two trimers (C3), and six regulatory PyrI chains organized as three dimers (R2).

The catalysed reaction is carbamoyl phosphate + L-aspartate = N-carbamoyl-L-aspartate + phosphate + H(+). Its pathway is pyrimidine metabolism; UMP biosynthesis via de novo pathway; (S)-dihydroorotate from bicarbonate: step 2/3. In terms of biological role, catalyzes the condensation of carbamoyl phosphate and aspartate to form carbamoyl aspartate and inorganic phosphate, the committed step in the de novo pyrimidine nucleotide biosynthesis pathway. The protein is Aspartate carbamoyltransferase catalytic subunit of Vibrio vulnificus (strain CMCP6).